The primary structure comprises 369 residues: 3-dehydroquinate synthase (369 aa).

NAD(+)-binding positions include D75–K80, G109–D113, T133–T134, K146, K155, and T173–T176. Residues E188, H251, and H268 each contribute to the Zn(2+) site.

It belongs to the sugar phosphate cyclases superfamily. Dehydroquinate synthase family. Requires Co(2+) as cofactor. The cofactor is Zn(2+). NAD(+) serves as cofactor.

It localises to the cytoplasm. The catalysed reaction is 7-phospho-2-dehydro-3-deoxy-D-arabino-heptonate = 3-dehydroquinate + phosphate. Its pathway is metabolic intermediate biosynthesis; chorismate biosynthesis; chorismate from D-erythrose 4-phosphate and phosphoenolpyruvate: step 2/7. Functionally, catalyzes the conversion of 3-deoxy-D-arabino-heptulosonate 7-phosphate (DAHP) to dehydroquinate (DHQ). The chain is 3-dehydroquinate synthase from Legionella pneumophila (strain Lens).